The primary structure comprises 227 residues: Cytochrome c oxidase subunit 2 (227 aa).

Residues 1–14 (MAYPFQLGLQDASS) are Mitochondrial intermembrane-facing. A helical transmembrane segment spans residues 15-45 (PIMEELTNFHDHTLMIVFLISSLVLYIISSM). Residues 46–59 (LTTKMTHTSTMDAQ) are Mitochondrial matrix-facing. Residues 60–87 (EVETIWTVLPAVILILIALPSLRILYMM) form a helical membrane-spanning segment. Over 88-227 (DEINNPVLTV…HFENWSTSMI (140 aa)) the chain is Mitochondrial intermembrane. 6 residues coordinate Cu cation: histidine 161, cysteine 196, glutamate 198, cysteine 200, histidine 204, and methionine 207. Residue glutamate 198 coordinates Mg(2+).

It belongs to the cytochrome c oxidase subunit 2 family. In terms of assembly, component of the cytochrome c oxidase (complex IV, CIV), a multisubunit enzyme composed of 14 subunits. The complex is composed of a catalytic core of 3 subunits MT-CO1, MT-CO2 and MT-CO3, encoded in the mitochondrial DNA, and 11 supernumerary subunits COX4I, COX5A, COX5B, COX6A, COX6B, COX6C, COX7A, COX7B, COX7C, COX8 and NDUFA4, which are encoded in the nuclear genome. The complex exists as a monomer or a dimer and forms supercomplexes (SCs) in the inner mitochondrial membrane with NADH-ubiquinone oxidoreductase (complex I, CI) and ubiquinol-cytochrome c oxidoreductase (cytochrome b-c1 complex, complex III, CIII), resulting in different assemblies (supercomplex SCI(1)III(2)IV(1) and megacomplex MCI(2)III(2)IV(2)). Found in a complex with TMEM177, COA6, COX18, COX20, SCO1 and SCO2. Interacts with TMEM177 in a COX20-dependent manner. Interacts with COX20. Interacts with COX16. Requires Cu cation as cofactor.

The protein localises to the mitochondrion inner membrane. It catalyses the reaction 4 Fe(II)-[cytochrome c] + O2 + 8 H(+)(in) = 4 Fe(III)-[cytochrome c] + 2 H2O + 4 H(+)(out). In terms of biological role, component of the cytochrome c oxidase, the last enzyme in the mitochondrial electron transport chain which drives oxidative phosphorylation. The respiratory chain contains 3 multisubunit complexes succinate dehydrogenase (complex II, CII), ubiquinol-cytochrome c oxidoreductase (cytochrome b-c1 complex, complex III, CIII) and cytochrome c oxidase (complex IV, CIV), that cooperate to transfer electrons derived from NADH and succinate to molecular oxygen, creating an electrochemical gradient over the inner membrane that drives transmembrane transport and the ATP synthase. Cytochrome c oxidase is the component of the respiratory chain that catalyzes the reduction of oxygen to water. Electrons originating from reduced cytochrome c in the intermembrane space (IMS) are transferred via the dinuclear copper A center (CU(A)) of subunit 2 and heme A of subunit 1 to the active site in subunit 1, a binuclear center (BNC) formed by heme A3 and copper B (CU(B)). The BNC reduces molecular oxygen to 2 water molecules using 4 electrons from cytochrome c in the IMS and 4 protons from the mitochondrial matrix. The sequence is that of Cytochrome c oxidase subunit 2 (MT-CO2) from Lophuromys flavopunctatus (Yellow-spotted brush-furred rat).